We begin with the raw amino-acid sequence, 930 residues long: uncharacterized protein (930 aa).

The Nuclear localization signal signature appears at 434-441 (IRRGISRK).

The protein resides in the nucleus. This is an uncharacterized protein from Chaetomium thermophilum (strain DSM 1495 / CBS 144.50 / IMI 039719) (Thermochaetoides thermophila).